The sequence spans 275 residues: 2,3,4,5-tetrahydropyridine-2,6-dicarboxylate N-succinyltransferase (275 aa).

It belongs to the transferase hexapeptide repeat family.

It is found in the cytoplasm. It catalyses the reaction (S)-2,3,4,5-tetrahydrodipicolinate + succinyl-CoA + H2O = (S)-2-succinylamino-6-oxoheptanedioate + CoA. It participates in amino-acid biosynthesis; L-lysine biosynthesis via DAP pathway; LL-2,6-diaminopimelate from (S)-tetrahydrodipicolinate (succinylase route): step 1/3. This chain is 2,3,4,5-tetrahydropyridine-2,6-dicarboxylate N-succinyltransferase, found in Ralstonia pickettii (strain 12J).